We begin with the raw amino-acid sequence, 362 residues long: 11-beta-hydroxysteroid dehydrogenase B (362 aa).

A helical; Signal-anchor for type II membrane protein membrane pass occupies residues 10–30; the sequence is FVVPPASLLMLAFTWPTLFFI. The Proline-knob signature appears at 13–26; it reads PPASLLMLAFTWPT. 55–81 is an NADP(+) binding site; it reads GASSGIGEQIAYQYAKRGANLVLVARR. Residue S185 participates in substrate binding. Residue Y198 is the Proton acceptor of the active site. NADP(+) is bound by residues 198–202 and K202; that span reads YSAAK. Residues 321-362 are disordered; the sequence is TGRPLLETSSPRRSAVMEGSSPRRLPPGPLTFSPAFQQQKSE.

Belongs to the short-chain dehydrogenases/reductases (SDR) family. As to expression, expressed in seeds (at protein level). Not expressed in stem, leaf or root (at protein level).

It is found in the lipid droplet. It localises to the membrane. It catalyses the reaction an 11beta-hydroxysteroid + NADP(+) = an 11-oxosteroid + NADPH + H(+). The catalysed reaction is corticosterone + NADP(+) = 11-dehydrocorticosterone + NADPH + H(+). The enzyme catalyses 17beta-estradiol + NADP(+) = estrone + NADPH + H(+). Its function is as follows. Has dehydrogenase activity against corticosterone (11 beta-hydroxysteroid) and estradiol (17 beta-hydroxysteroid), with similar activities to both sterols in the presence of NADP(+), but negligible activity to either sterol in the presence of NAD(+). May be involved in signal transduction regulated by various sterols. This chain is 11-beta-hydroxysteroid dehydrogenase B, found in Sesamum indicum (Oriental sesame).